Consider the following 365-residue polypeptide: L-lactate oxidase (365 aa).

In terms of domain architecture, FMN hydroxy acid dehydrogenase spans 6–365 (RIPPGVWNAI…ITHDTLTPSC (360 aa)). Pyruvate is bound at residue Tyr32. Residues 85 to 87 (PVA), Ser114, and Gln135 each bind FMN. Tyr137 contributes to the pyruvate binding site. Residues Thr163, Lys237, and Ser259 each contribute to the FMN site. His261 and Arg264 together coordinate pyruvate. The active-site Proton acceptor is His261. Residues 292–296 (DGGVR) and Arg316 contribute to the FMN site.

Belongs to the FMN-dependent alpha-hydroxy acid dehydrogenase family. As to quaternary structure, homotetramer. The cofactor is FMN.

It catalyses the reaction (S)-lactate + O2 = pyruvate + H2O2. It carries out the reaction glycolate + O2 = glyoxylate + H2O2. In terms of biological role, catalyzes the oxidation of (S)-lactate (L-lactate) to pyruvate, with a reduction of O2 to H2O2. To a lesser extent is also able to use glycolate as substrate. This is L-lactate oxidase from Alicycliphilus denitrificans (strain DSM 14773 / CIP 107495 / K601).